The chain runs to 134 residues: Probable glycine cleavage system H protein (134 aa).

In terms of domain architecture, Lipoyl-binding spans 29 to 110; that stretch reads TVLVGITDYA…PYGAWIAKIK (82 aa). N6-lipoyllysine is present on lysine 70.

The protein belongs to the GcvH family. As to quaternary structure, the glycine cleavage system is composed of four proteins: P, T, L and H. Requires (R)-lipoate as cofactor.

Functionally, the glycine cleavage system catalyzes the degradation of glycine. The H protein shuttles the methylamine group of glycine from the P protein to the T protein. In Pyrococcus horikoshii (strain ATCC 700860 / DSM 12428 / JCM 9974 / NBRC 100139 / OT-3), this protein is Probable glycine cleavage system H protein.